The primary structure comprises 359 residues: UDP-3-O-acylglucosamine N-acyltransferase (359 aa).

The active-site Proton acceptor is H256.

Belongs to the transferase hexapeptide repeat family. LpxD subfamily. As to quaternary structure, homotrimer.

The enzyme catalyses a UDP-3-O-[(3R)-3-hydroxyacyl]-alpha-D-glucosamine + a (3R)-hydroxyacyl-[ACP] = a UDP-2-N,3-O-bis[(3R)-3-hydroxyacyl]-alpha-D-glucosamine + holo-[ACP] + H(+). It participates in bacterial outer membrane biogenesis; LPS lipid A biosynthesis. Catalyzes the N-acylation of UDP-3-O-acylglucosamine using 3-hydroxyacyl-ACP as the acyl donor. Is involved in the biosynthesis of lipid A, a phosphorylated glycolipid that anchors the lipopolysaccharide to the outer membrane of the cell. In Rhodopseudomonas palustris (strain HaA2), this protein is UDP-3-O-acylglucosamine N-acyltransferase.